Reading from the N-terminus, the 735-residue chain is Transmembrane channel-like protein 7 (735 aa).

Residues 1 to 164 (MSEFGAGAEL…QSYFSFLRFL (164 aa)) lie on the Extracellular side of the membrane. A helical membrane pass occupies residues 165–185 (VLLNFLMFILMFSFVTLPAVI). Over 186–233 (SNYGIFNSSSTKISPNNTEPYCTVYTPSGNKGLVYFYTYLKDLLTGTG) the chain is Cytoplasmic. A helical membrane pass occupies residues 234 to 254 (FLEVTVLFYGYYTIDAAWFSV). Over 255–258 (LRYN) the chain is Extracellular. A helical membrane pass occupies residues 259-279 (LPLAYLLTTFAYLALSFVWII). The Cytoplasmic portion of the chain corresponds to 280-355 (KRSVERFRQH…TMKEKLQIYS (76 aa)). The helical transmembrane segment at 356-376 (LRIFINIIVIAVLSGCFYSIY) threads the bilayer. The Extracellular portion of the chain corresponds to 377 to 403 (RATVFSQENSSVSIRRNVMIANLLVQY). The N-linked (GlcNAc...) asparagine glycan is linked to Asn385. A helical membrane pass occupies residues 404 to 424 (LPSIVITSANFIAPQIFSFLI). Topologically, residues 425 to 436 (RFEDYSAAFEIR) are cytoplasmic. The helical transmembrane segment at 437–457 (LTLIRCVFVRLANVGVLLFSL) threads the bilayer. Topologically, residues 458 to 488 (WSQIHCDNDQCKACGYDYELYPCWESAVGQE) are extracellular. A helical transmembrane segment spans residues 489–509 (MYKLLIFDFMIIIAMTLFVDF). The Cytoplasmic portion of the chain corresponds to 510–548 (PRKLLVTYCSWKLVQWWGLQEFGISDNVLEIIYGQTICW). The helical transmembrane segment at 549 to 569 (IGTFFSPLLPAIATIKYFIIF) threads the bilayer. At 570–594 (YIKKISLIHTRKPASRPIRASSSNF) the chain is on the extracellular side. The helical transmembrane segment at 595-615 (FFLAVLLIGLILAFVPLGVSI) threads the bilayer. Residues 616 to 634 (ALISSSKACGPFRNFNTSW) lie on the Cytoplasmic side of the membrane. A helical transmembrane segment spans residues 635–655 (AIVPYTILEFPIGLQKFLYGI). The Extracellular portion of the chain corresponds to 656–658 (ASE). A helical transmembrane segment spans residues 659–679 (AFAVPFFVIACLFMFYFIALA). The Cytoplasmic portion of the chain corresponds to 680–735 (GAHKRVVEQLREQLVTESRDKLFLLEKLSEAQKNSGKPQKARKLTSSWLLEPLDKG). The interval 710–735 (AQKNSGKPQKARKLTSSWLLEPLDKG) is disordered.

It belongs to the TMC family.

Its subcellular location is the membrane. Probable component of an ion channel. This chain is Transmembrane channel-like protein 7 (Tmc7), found in Gallus gallus (Chicken).